A 207-amino-acid polypeptide reads, in one-letter code: Ribonuclease HII (207 aa).

Residues 18 to 207 form the RNase H type-2 domain; the sequence is GLVAGVDEAG…VAEVLREALP (190 aa). A divalent metal cation-binding residues include D24, E25, and D116.

This sequence belongs to the RNase HII family. The cofactor is Mn(2+). Requires Mg(2+) as cofactor.

It localises to the cytoplasm. It carries out the reaction Endonucleolytic cleavage to 5'-phosphomonoester.. Functionally, endonuclease that specifically degrades the RNA of RNA-DNA hybrids. This chain is Ribonuclease HII, found in Albidiferax ferrireducens (strain ATCC BAA-621 / DSM 15236 / T118) (Rhodoferax ferrireducens).